Here is a 148-residue protein sequence, read N- to C-terminus: Ribosomal RNA large subunit methyltransferase H 2 (148 aa).

Residues L74, G106, and 125–130 contribute to the S-adenosyl-L-methionine site; that span reads FSKMTF.

This sequence belongs to the RNA methyltransferase RlmH family. As to quaternary structure, homodimer.

The protein resides in the cytoplasm. The enzyme catalyses pseudouridine(1915) in 23S rRNA + S-adenosyl-L-methionine = N(3)-methylpseudouridine(1915) in 23S rRNA + S-adenosyl-L-homocysteine + H(+). In terms of biological role, specifically methylates the pseudouridine at position 1915 (m3Psi1915) in 23S rRNA. The chain is Ribosomal RNA large subunit methyltransferase H 2 from Caldanaerobacter subterraneus subsp. tengcongensis (strain DSM 15242 / JCM 11007 / NBRC 100824 / MB4) (Thermoanaerobacter tengcongensis).